Here is a 377-residue protein sequence, read N- to C-terminus: Succinyl-diaminopimelate desuccinylase (377 aa).

Histidine 68 contacts Zn(2+). Aspartate 70 is an active-site residue. Zn(2+) is bound at residue aspartate 101. The active-site Proton acceptor is the glutamate 135. The Zn(2+) site is built by glutamate 136, glutamate 164, and histidine 350.

This sequence belongs to the peptidase M20A family. DapE subfamily. Homodimer. It depends on Zn(2+) as a cofactor. Co(2+) is required as a cofactor.

It carries out the reaction N-succinyl-(2S,6S)-2,6-diaminopimelate + H2O = (2S,6S)-2,6-diaminopimelate + succinate. The protein operates within amino-acid biosynthesis; L-lysine biosynthesis via DAP pathway; LL-2,6-diaminopimelate from (S)-tetrahydrodipicolinate (succinylase route): step 3/3. Functionally, catalyzes the hydrolysis of N-succinyl-L,L-diaminopimelic acid (SDAP), forming succinate and LL-2,6-diaminopimelate (DAP), an intermediate involved in the bacterial biosynthesis of lysine and meso-diaminopimelic acid, an essential component of bacterial cell walls. The sequence is that of Succinyl-diaminopimelate desuccinylase from Aliivibrio fischeri (strain MJ11) (Vibrio fischeri).